The sequence spans 894 residues: Sorting nexin-14 (894 aa).

A PXA domain is found at 78–252 (SSKVDASLSE…LLIIFIDDSP (175 aa)). The RGS domain maps to 284–416 (ELKQIREQQD…CHSDEYFRQL (133 aa)). Ser496 is subject to Phosphoserine. The region spanning 518–638 (PYVDFFEDPS…DFLSPNGGET (121 aa)) is the PX domain.

It belongs to the sorting nexin family.

The protein localises to the cytoplasm. Its subcellular location is the cell projection. It localises to the dendrite. Its function is as follows. Plays a role in maintaining normal neuronal excitability and synaptic transmission. May be involved in several stages of intracellular trafficking. This is Sorting nexin-14 (SNX14) from Pongo abelii (Sumatran orangutan).